Here is a 577-residue protein sequence, read N- to C-terminus: MALSFFGGGGSASHAKYFDIRLDEDYIVFRGGEQEAASAHLSGKLILCLSEPLSIKHIRLHLTGISRVCWHLPSSSAGGGRKSWRERVFYEKTWRFREPGKGKTEILPAGNYEYPFNIVLEGSMPESVEGLSDTYVTYRFKAEIGRKYAKDIVVRRPLRIIRTLEPSALELSHAMSVENIWPNKIEYSISTPTKAVIFGTSIRVDFKLIPLLKGLKIGQIVSQLIESHDLTLNPEDPDSIRNTYKNTRTIINDEYELDADNALEIIDEAAEGYQFSRFLDLPKTLTRCLQDTDTKGIKIRHKLKFRVQLLNPDGHISELRATLPVSIFISPNLAIDDNNNLVDQTPQTAQRAVDDLAQQAPPLYGEHQFDQLYSELDPAGYRTPGPGSGPGTPFGTLSRNLSAENLASMNALTTTDISASALHSRLSNLHASRHSNPSPSESENQLESRLGVPTDYFGPSSGSNTHSLTSPELSRRPSDEVDHDHVPSGMATPFHPQYAEVETPEPCPKLFHSGPHFSEDVAIPAPQSPQQAHVRSANRSSSYFNPMDLLHHRPGYPGGHGDEEERQLRLMQARARV.

Disordered stretches follow at residues 376-398 (LDPAGYRTPGPGSGPGTPFGTLS) and 428-566 (NLHA…EEER). Polar residues-rich tracts occupy residues 428–447 (NLHASRHSNPSPSESENQLE) and 460–472 (SSGSNTHSLTSPE). Over residues 473 to 486 (LSRRPSDEVDHDHV) the composition is skewed to basic and acidic residues. A compositionally biased stretch (polar residues) spans 528 to 544 (SPQQAHVRSANRSSSYF).

It belongs to the arrestin family. In terms of assembly, interacts with hulA.

Functionally, component of the regulatory network controlling carbon source utilization through ubiquitination and deubiquitination involving creA, creB, creC, creD and acrB. May be involved in signaling by recognizing appropriately phosphorylated substrates via its arrestin domains and then recruit a HECT-type ubiquitin ligase such as hulA, leading to ubiquitination of the substrate, providing a link between ubiquitination and phosphorylation in protein regulation and stability. In Aspergillus terreus (strain NIH 2624 / FGSC A1156), this protein is Probable HECT-type ubiquitin ligase-interacting protein creD (creD).